We begin with the raw amino-acid sequence, 163 residues long: Lipoprotein signal peptidase (163 aa).

A run of 4 helical transmembrane segments spans residues 5-25 (VLTFLGISFVIIVLDLTTKSL), 37-57 (IIPGLFNLVLVWNKGAAFGML), 67-87 (LMLVGSSIIAAVITAGYVFKS), and 91-111 (LSNLEVLSLALICGGSVGNLY). Residues D121 and D139 contribute to the active site. Residues 132–152 (WPAFNVADASITIGIALFIGY) traverse the membrane as a helical segment.

This sequence belongs to the peptidase A8 family.

It is found in the cell inner membrane. It catalyses the reaction Release of signal peptides from bacterial membrane prolipoproteins. Hydrolyzes -Xaa-Yaa-Zaa-|-(S,diacylglyceryl)Cys-, in which Xaa is hydrophobic (preferably Leu), and Yaa (Ala or Ser) and Zaa (Gly or Ala) have small, neutral side chains.. The protein operates within protein modification; lipoprotein biosynthesis (signal peptide cleavage). Functionally, this protein specifically catalyzes the removal of signal peptides from prolipoproteins. The protein is Lipoprotein signal peptidase of Sulfurihydrogenibium sp. (strain YO3AOP1).